We begin with the raw amino-acid sequence, 77 residues long: MLTPAVFPAVLYLLALVVWVEMFCLVAVAVVEREIAWALLLRMLVVGLMVEVGAAAAWTFVRCLAYQRSFPVLTAFP.

Transmembrane regions (helical) follow at residues 10–30 and 35–55; these read VLYLLALVVWVEMFCLVAVAV and IAWALLLRMLVVGLMVEVGAA.

Its subcellular location is the host membrane. In Homo sapiens (Human), this protein is Protein UL148C (UL148C).